The primary structure comprises 574 residues: Sulfate adenylyltransferase (574 aa).

The segment at 1–169 (MSNPPHGGVL…VEAINKLNHY (169 aa)) is N-terminal. The segment at 170-394 (DYVALRYTPA…LRESSRPRST (225 aa)) is catalytic. Gln197 is a sulfate binding site. ATP contacts are provided by residues 197-200 (QTRN) and 291-294 (GRDH). Residues Thr198, Arg199, and Asn200 contribute to the active site. Arg199 contributes to the sulfate binding site. Ala295 is a sulfate binding site. Val333 is a binding site for ATP. The allosteric regulation domain; adenylyl-sulfate kinase-like stretch occupies residues 395–574 (QGFTIFLTGY…LETEGFFDRA (180 aa)). 3'-phosphoadenylyl sulfate contacts are provided by residues 434 to 437 (DTVR), Arg451, 477 to 478 (IA), and Arg516.

This sequence in the N-terminal section; belongs to the sulfate adenylyltransferase family. The protein in the C-terminal section; belongs to the APS kinase family. As to quaternary structure, homohexamer. Dimer of trimers.

It localises to the cytoplasm. The enzyme catalyses sulfate + ATP + H(+) = adenosine 5'-phosphosulfate + diphosphate. Its pathway is sulfur metabolism; hydrogen sulfide biosynthesis; sulfite from sulfate: step 1/3. Allosterically inhibited by 3'-phosphoadenosine 5'-phosphosulfate (PAPS). In terms of biological role, catalyzes the first intracellular reaction of sulfate assimilation, forming adenosine-5'-phosphosulfate (APS) from inorganic sulfate and ATP. Plays an important role in sulfate activation as a component of the biosynthesis pathway of sulfur-containing amino acids. The polypeptide is Sulfate adenylyltransferase (Aspergillus clavatus (strain ATCC 1007 / CBS 513.65 / DSM 816 / NCTC 3887 / NRRL 1 / QM 1276 / 107)).